The primary structure comprises 75 residues: Endogenous retrovirus group K member 7 Np9 protein (75 aa).

The segment at 24–43 (PKRQRPSRTGHDDDGGFVEK) is disordered. The span at 32 to 43 (TGHDDDGGFVEK) shows a compositional bias: basic and acidic residues.

It is found in the nucleus. Its function is as follows. May possess a function in tumorigenesis. The sequence is that of Endogenous retrovirus group K member 7 Np9 protein (ERVK-7) from Homo sapiens (Human).